The sequence spans 111 residues: Urease subunit beta (111 aa).

This sequence belongs to the urease beta subunit family. Heterotrimer of UreA (gamma), UreB (beta) and UreC (alpha) subunits. Three heterotrimers associate to form the active enzyme.

The protein localises to the cytoplasm. It carries out the reaction urea + 2 H2O + H(+) = hydrogencarbonate + 2 NH4(+). It participates in nitrogen metabolism; urea degradation; CO(2) and NH(3) from urea (urease route): step 1/1. The chain is Urease subunit beta from Psychrobacter cryohalolentis (strain ATCC BAA-1226 / DSM 17306 / VKM B-2378 / K5).